The sequence spans 479 residues: Ribosomal RNA small subunit methyltransferase F (479 aa).

Residues 125–131 (AAAPGSK), Glu-149, Asp-176, and Asp-194 contribute to the S-adenosyl-L-methionine site. Cys-247 acts as the Nucleophile in catalysis.

Belongs to the class I-like SAM-binding methyltransferase superfamily. RsmB/NOP family.

It localises to the cytoplasm. The catalysed reaction is cytidine(1407) in 16S rRNA + S-adenosyl-L-methionine = 5-methylcytidine(1407) in 16S rRNA + S-adenosyl-L-homocysteine + H(+). Specifically methylates the cytosine at position 1407 (m5C1407) of 16S rRNA. The polypeptide is Ribosomal RNA small subunit methyltransferase F (Escherichia coli O7:K1 (strain IAI39 / ExPEC)).